The sequence spans 213 residues: MGITMDEEVIFETPRELISIKRIKDIPRSKDTHVFAACITSDGYPLIGARRTSFAFQAILSQQNSDSIFRVSTKLLRFMYYNELREIFRRLRKGSINNIDPHFEELILLGGKLDKKESIKDCLRRELKEESDERITVKEFGNVILKLTTQDKLFNKVYIGYCMSCFINQSLEDLSHTSIYNVEIRKIKSLNDCINDDKYEYLSYIYNMLVNSK.

Residues 30–209 (KDTHVFAACI…EYLSYIYNML (180 aa)) form the Nudix hydrolase domain. Positions 111 to 132 (GKLDKKESIKDCLRRELKEESD) match the Nudix box motif. E117 contributes to the Mg(2+) binding site. The Nucleophile role is filled by E126. Mg(2+) is bound by residues E130 and D151.

This sequence belongs to the Nudix hydrolase family. It depends on Mg(2+) as a cofactor. Mn(2+) serves as cofactor.

Decapping enzyme required for the removal of the 5'-end m7GpppN cap tethered to viral and host mRNAs to allow their decay in cells. May therefore accelerate viral and cellular mRNA turnover to eliminate competing host mRNAs and allow stage-specific synthesis of viral proteins. Acceleration of the turnover of cellular transcripts may even promote the shutoff of host protein synthesis. Does not cleave unmethylated RNAs or RNAs shorter than 24 nucleotides. The polypeptide is mRNA-decapping protein D9 (Homo sapiens (Human)).